Reading from the N-terminus, the 331-residue chain is Biotin synthase (331 aa).

The Radical SAM core domain maps to 52–277; it reads PDVEVEGIIS…RTMLRFAGGR (226 aa). Residues cysteine 67, cysteine 71, and cysteine 74 each coordinate [4Fe-4S] cluster. [2Fe-2S] cluster is bound by residues cysteine 110, cysteine 143, cysteine 202, and arginine 272.

This sequence belongs to the radical SAM superfamily. Biotin synthase family. Homodimer. [4Fe-4S] cluster is required as a cofactor. It depends on [2Fe-2S] cluster as a cofactor.

The catalysed reaction is (4R,5S)-dethiobiotin + (sulfur carrier)-SH + 2 reduced [2Fe-2S]-[ferredoxin] + 2 S-adenosyl-L-methionine = (sulfur carrier)-H + biotin + 2 5'-deoxyadenosine + 2 L-methionine + 2 oxidized [2Fe-2S]-[ferredoxin]. Its pathway is cofactor biosynthesis; biotin biosynthesis; biotin from 7,8-diaminononanoate: step 2/2. Its function is as follows. Catalyzes the conversion of dethiobiotin (DTB) to biotin by the insertion of a sulfur atom into dethiobiotin via a radical-based mechanism. This chain is Biotin synthase, found in Mycolicibacterium vanbaalenii (strain DSM 7251 / JCM 13017 / BCRC 16820 / KCTC 9966 / NRRL B-24157 / PYR-1) (Mycobacterium vanbaalenii).